We begin with the raw amino-acid sequence, 676 residues long: Mediator of RNA polymerase II transcription subunit 17 (676 aa).

2 disordered regions span residues 27-68 (IGSK…QFSN) and 117-176 (IEND…TQDT). Residues 29–40 (SKSTSPHSNSTS) are compositionally biased toward low complexity. 2 stretches are compositionally biased toward basic and acidic residues: residues 47–56 (HNTENEEVDN) and 120–134 (DNGKQESKDDTKAED). Acidic residues predominate over residues 135-145 (GIDTMDIDQND). A compositionally biased stretch (polar residues) spans 146 to 160 (NSEANTNDIGYNEWS).

This sequence belongs to the Mediator complex subunit 17 family. Component of the Mediator complex.

It is found in the nucleus. Its function is as follows. Component of the Mediator complex, a coactivator involved in the regulated transcription of nearly all RNA polymerase II-dependent genes. Mediator functions as a bridge to convey information from gene-specific regulatory proteins to the basal RNA polymerase II transcription machinery. Mediator is recruited to promoters by direct interactions with regulatory proteins and serves as a scaffold for the assembly of a functional preinitiation complex with RNA polymerase II and the general transcription factors. The sequence is that of Mediator of RNA polymerase II transcription subunit 17 (SRB4) from Candida glabrata (strain ATCC 2001 / BCRC 20586 / JCM 3761 / NBRC 0622 / NRRL Y-65 / CBS 138) (Yeast).